Here is a 214-residue protein sequence, read N- to C-terminus: Orotate phosphoribosyltransferase (214 aa).

5-phospho-alpha-D-ribose 1-diphosphate is bound at residue K26. An orotate-binding site is contributed by 34–35 (FF). 5-phospho-alpha-D-ribose 1-diphosphate is bound by residues 72–73 (YK), R99, K100, K103, H105, and 124–132 (DDVITAGTA). Positions 128 and 156 each coordinate orotate.

It belongs to the purine/pyrimidine phosphoribosyltransferase family. PyrE subfamily. In terms of assembly, homodimer. It depends on Mg(2+) as a cofactor.

The catalysed reaction is orotidine 5'-phosphate + diphosphate = orotate + 5-phospho-alpha-D-ribose 1-diphosphate. It participates in pyrimidine metabolism; UMP biosynthesis via de novo pathway; UMP from orotate: step 1/2. In terms of biological role, catalyzes the transfer of a ribosyl phosphate group from 5-phosphoribose 1-diphosphate to orotate, leading to the formation of orotidine monophosphate (OMP). In Proteus mirabilis (strain HI4320), this protein is Orotate phosphoribosyltransferase.